Here is a 442-residue protein sequence, read N- to C-terminus: Cytokine receptor-like factor 3 (442 aa).

The stretch at 10-46 forms a coiled coil; sequence EVLLQEARENVEAAQSYRRELGQRLQGLREAQRQIKE. The region spanning 181–274 is the Fibronectin type-III domain; that stretch reads PPVQIEELIE…PQTGHSTLVP (94 aa).

It belongs to the cytokine receptor-like factor 3 family.

The protein resides in the cytoplasm. Its function is as follows. May play a role in the negative regulation of cell cycle progression. This chain is Cytokine receptor-like factor 3 (Crlf3), found in Mus musculus (Mouse).